A 459-amino-acid polypeptide reads, in one-letter code: FAD-dependent monooxygenase CTB5 (459 aa).

The FAD-binding PCMH-type domain occupies 10 to 187 (SDLHPSCIAL…TAVTLKAFEQ (178 aa)).

The protein belongs to the oxygen-dependent FAD-linked oxidoreductase family.

Its pathway is mycotoxin biosynthesis. Functionally, FAD-dependent monooxygenase; part of the gene cluster that mediates the biosynthesis of cercosporin, a light-activated, non-host-selective toxin. The perylenequinone chromophore of cercosporin absorbs light energy to attain an electronically-activated triplet state and produces active oxygen species such as the hydroxyl radical, superoxide, hydrogen peroxide or singlet oxygen upon reaction with oxygen molecules. These reactive oxygen species cause damage to various cellular components including lipids, proteins and nucleic acids. The first step of cercosporin biosynthesis is performed by the polyketide synthase CTB1 which catalyzes the formation of nor-toralactone. The starter unit acyltransferase (SAT) domain of CTB1 initiates polyketide extension by the selective utilization of acetyl-CoA, which is elongated to the heptaketide in the beta-ketoacyl synthase (KS) domain by successive condensations with six malonyl units introduced by the malonyl acyltransferase (MAT) domain. The product template (PT) domain catalyzes C4-C9 and C2-C11 aldol cyclizations and dehydrations to a trihydroxynaphthalene, which is thought to be delivered to the thioesterase (TE) domain for product release. The bifunctional enzyme CTB3 then methylates nor-toralactone to toralactone before conducting an unusual oxidative aromatic ring opening. The O-methyltransferase CTB2 further methylates the nascent OH-6 of the CBT3 product, blocking further oxidation at this site before the reductase CTB6 reduces the 2-oxopropyl ketone at position C7, giving naphthalene. The FAD-dependent monooxygenase CTB5 in concert with the multicopper oxidase CTB12 are responsible for homodimerization of naphthalene with CTB7 installing the dioxepine moiety, finally producing cercosporin. The fasciclin domain-containing protein CTB11 might act with CTB5 and CTB12 whereas the roles of CTB9 and CTB10 have still to be elucidated. The chain is FAD-dependent monooxygenase CTB5 from Cercospora nicotianae (Barn spot disease fungus).